The primary structure comprises 72 residues: Translation initiation factor IF-1 (72 aa).

The 72-residue stretch at 1 to 72 folds into the S1-like domain; that stretch reads MAKEESIEVE…SKGRITYRYK (72 aa).

The protein belongs to the IF-1 family. In terms of assembly, component of the 30S ribosomal translation pre-initiation complex which assembles on the 30S ribosome in the order IF-2 and IF-3, IF-1 and N-formylmethionyl-tRNA(fMet); mRNA recruitment can occur at any time during PIC assembly.

It localises to the cytoplasm. Functionally, one of the essential components for the initiation of protein synthesis. Stabilizes the binding of IF-2 and IF-3 on the 30S subunit to which N-formylmethionyl-tRNA(fMet) subsequently binds. Helps modulate mRNA selection, yielding the 30S pre-initiation complex (PIC). Upon addition of the 50S ribosomal subunit IF-1, IF-2 and IF-3 are released leaving the mature 70S translation initiation complex. This chain is Translation initiation factor IF-1, found in Chlorobaculum tepidum (strain ATCC 49652 / DSM 12025 / NBRC 103806 / TLS) (Chlorobium tepidum).